The chain runs to 259 residues: Insulin-like growth factor-binding protein 4 (259 aa).

Residues 1–22 form the signal peptide; that stretch reads MLPLCLVAALLLSASGPRPSLG. The 81-residue stretch at 24-104 folds into the IGFBP N-terminal domain; it reads EAIHCPPCSE…MHGQGLCMEL (81 aa). 6 disulfides stabilise this stretch: Cys-28–Cys-54, Cys-31–Cys-56, Cys-39–Cys-57, Cys-45–Cys-60, Cys-68–Cys-81, and Cys-75–Cys-101. A disordered region spans residues 115–136; it reads QPSDKDEGDHPNNSFSPCSPQD. An N-linked (GlcNAc...) asparagine glycan is attached at Asn-126. Intrachain disulfides connect Cys-132-Cys-139, Cys-175-Cys-205, Cys-216-Cys-227, and Cys-229-Cys-250. Residues 172–250 enclose the Thyroglobulin type-1 domain; the sequence is QGSCQSELHR…GLEPKGELDC (79 aa). Position 256 is a phosphoserine (Ser-256).

In terms of assembly, binds IGF2 more than IGF1.

Its subcellular location is the secreted. Its function is as follows. IGF-binding proteins prolong the half-life of the IGFs and have been shown to either inhibit or stimulate the growth promoting effects of the IGFs on cell culture. They alter the interaction of IGFs with their cell surface receptors. The chain is Insulin-like growth factor-binding protein 4 (IGFBP4) from Sus scrofa (Pig).